The chain runs to 427 residues: Adenylosuccinate synthetase (427 aa).

GTP contacts are provided by residues 12–18 (GDEGKGK) and 40–42 (GHT). The active-site Proton acceptor is the aspartate 13. Mg(2+)-binding residues include aspartate 13 and glycine 40. IMP contacts are provided by residues 13-16 (DEGK), 38-41 (NAGH), threonine 128, arginine 142, glutamine 223, threonine 238, and arginine 302. Catalysis depends on histidine 41, which acts as the Proton donor. 298–304 (VTTGRAR) contributes to the substrate binding site. GTP is bound by residues arginine 304, 330–332 (KLD), and 412–414 (GVG).

The protein belongs to the adenylosuccinate synthetase family. As to quaternary structure, homodimer. Mg(2+) serves as cofactor.

Its subcellular location is the cytoplasm. The enzyme catalyses IMP + L-aspartate + GTP = N(6)-(1,2-dicarboxyethyl)-AMP + GDP + phosphate + 2 H(+). It participates in purine metabolism; AMP biosynthesis via de novo pathway; AMP from IMP: step 1/2. Its function is as follows. Plays an important role in the de novo pathway of purine nucleotide biosynthesis. Catalyzes the first committed step in the biosynthesis of AMP from IMP. This chain is Adenylosuccinate synthetase, found in Frankia alni (strain DSM 45986 / CECT 9034 / ACN14a).